The following is a 132-amino-acid chain: Glycine cleavage system H protein (132 aa).

The Lipoyl-binding domain maps to 24–106 (IATIGLSAFA…YGDGWLIKVR (83 aa)). At lysine 65 the chain carries N6-lipoyllysine.

The protein belongs to the GcvH family. In terms of assembly, the glycine cleavage system is composed of four proteins: P, T, L and H. (R)-lipoate serves as cofactor.

Functionally, the glycine cleavage system catalyzes the degradation of glycine. The H protein shuttles the methylamine group of glycine from the P protein to the T protein. In Rippkaea orientalis (strain PCC 8801 / RF-1) (Cyanothece sp. (strain PCC 8801)), this protein is Glycine cleavage system H protein.